We begin with the raw amino-acid sequence, 648 residues long: MVKVTDIVLWDKPGEKVLLLGNQAIVRGALEGNIGVYAAYPGTPSSEITDTMAMVAKKAGVYMEYSTNEKVAFETALSASWAGLRAMTAMKHVGLNVAMDSFMTVSYMGINGGLIVVVADDPSMWSSQNEQDTRAIAKFANIPVLEPSSVQEAKDMVKYAFEISEKYGQMVILRTTTRSSHMRGDVVLGELPQEIKEGKRKFGNFKKNPEKYVDIPAFQRPKHPWLLETIEKFREEFNTSPFNWIEGPEDAKVGIIAPGLSYAYVKEALAWLGIDNVKILKLGTPFPVPYGLLEKFFNGLERVLIVEELEPVVEEQVKVWAFDNNINIEIHGKDLVPRVYEMTTRRAVEAVAKFLGVETPINFQEIDEKYKKVQEMVPPRPPSLCPACPHRNTFFAIRKAATPRAIFPSDIGCYTLGVLPPLKTVDTTIAMGGSIGVAHGLSIALNGALGEEQRKTGKEKKIIVATIGDSTFFHTGLPALANAIYNRSNVLIVVMDNMVTAMTGDQPNPGTGETPHGPGKRILIEEVARAMGADFVAVVDPYDIKETYETIKKALEVEGVSVVVSRRACALYRIGQLRREGKQWPIYQVNEEKCTGCKICINAYGCPAIYWDAEKKKARVDPLMCWGCGGCAQVCPFGAFEKVREGEL.

4Fe-4S ferredoxin-type domains are found at residues 585-614 and 616-645; these read PIYQVNEEKCTGCKICINAYGCPAIYWDAE and KKARVDPLMCWGCGGCAQVCPFGAFEKVRE. Positions 594, 597, 600, 606, 625, 628, 631, and 635 each coordinate [4Fe-4S] cluster.

In terms of assembly, heterodimer of the IorA and IorB subunits. [4Fe-4S] cluster is required as a cofactor.

It carries out the reaction indole-3-pyruvate + 2 oxidized [2Fe-2S]-[ferredoxin] + CoA = (indol-3-yl)acetyl-CoA + 2 reduced [2Fe-2S]-[ferredoxin] + CO2 + H(+). Catalyzes the ferredoxin-dependent oxidative decarboxylation of arylpyruvates. This Pyrococcus horikoshii (strain ATCC 700860 / DSM 12428 / JCM 9974 / NBRC 100139 / OT-3) protein is Indolepyruvate oxidoreductase subunit IorA (iorA).